Consider the following 414-residue polypeptide: Probable protein phosphatase 2C 9 (414 aa).

A helical membrane pass occupies residues 15 to 37 (TATAAVAAAVSASAAAAVSSAID). Residues 56 to 95 (LQAGEDGRPGKRQRLARTASGAPRPDEDSASERPSCGRTE) form a disordered region. Residues 99–410 (RYGVTAVCGR…DNVSVVVVDL (312 aa)) form the PPM-type phosphatase domain. Mn(2+) is bound by residues D136 and G137. Basic and acidic residues predominate over residues 186–195 (GNRASTRSDD). Residues 186 to 212 (GNRASTRSDDEPACPCEQQTPSRRDHA) are disordered. Residue D319 coordinates Mn(2+). A disordered region spans residues 345–372 (APAARPSGVPSSAEAAETENGGAASVKG). Residues 355–369 (SSAEAAETENGGAAS) are compositionally biased toward low complexity. D401 is a Mn(2+) binding site.

This sequence belongs to the PP2C family. Requires Mg(2+) as cofactor. Mn(2+) serves as cofactor.

It is found in the membrane. It carries out the reaction O-phospho-L-seryl-[protein] + H2O = L-seryl-[protein] + phosphate. The enzyme catalyses O-phospho-L-threonyl-[protein] + H2O = L-threonyl-[protein] + phosphate. The chain is Probable protein phosphatase 2C 9 from Oryza sativa subsp. japonica (Rice).